The sequence spans 277 residues: NADPH-dependent 7-cyano-7-deazaguanine reductase (277 aa).

Substrate is bound at residue 86-88 (IES). NADPH is bound at residue 88 to 89 (SK). The active-site Thioimide intermediate is cysteine 184. The active-site Proton donor is the aspartate 191. 223 to 224 (HE) provides a ligand contact to substrate. 252–253 (RG) contributes to the NADPH binding site.

This sequence belongs to the GTP cyclohydrolase I family. QueF type 2 subfamily. In terms of assembly, homodimer.

It is found in the cytoplasm. The catalysed reaction is 7-aminomethyl-7-carbaguanine + 2 NADP(+) = 7-cyano-7-deazaguanine + 2 NADPH + 3 H(+). Its pathway is tRNA modification; tRNA-queuosine biosynthesis. Its function is as follows. Catalyzes the NADPH-dependent reduction of 7-cyano-7-deazaguanine (preQ0) to 7-aminomethyl-7-deazaguanine (preQ1). The polypeptide is NADPH-dependent 7-cyano-7-deazaguanine reductase (Chromohalobacter salexigens (strain ATCC BAA-138 / DSM 3043 / CIP 106854 / NCIMB 13768 / 1H11)).